Reading from the N-terminus, the 319-residue chain is Probable carboxylesterase 5 (319 aa).

M1 carries the post-translational modification N-acetylmethionine. The Involved in the stabilization of the negatively charged intermediate by the formation of the oxyanion hole motif lies at 79 to 81 (HGG). Catalysis depends on residues S163, D262, and H294.

This sequence belongs to the 'GDXG' lipolytic enzyme family. Expressed in roots, leaves, stems, flowers and siliques.

The catalysed reaction is a carboxylic ester + H2O = an alcohol + a carboxylate + H(+). Functionally, carboxylesterase acting on esters with varying acyl chain length. The polypeptide is Probable carboxylesterase 5 (CXE5) (Arabidopsis thaliana (Mouse-ear cress)).